We begin with the raw amino-acid sequence, 218 residues long: Sulfite reductase, assimilatory-type (218 aa).

The [4Fe-4S] cluster site is built by Cys-91, Cys-97, Cys-131, and Cys-135. Cys-135 contacts siroheme.

This enzyme catalyzes the 6-electron reduction of sulfite to sulfide. This is one of several activities required for the biosynthesis of L-cysteine from sulfate. This Nitratidesulfovibrio vulgaris (strain ATCC 29579 / DSM 644 / CCUG 34227 / NCIMB 8303 / VKM B-1760 / Hildenborough) (Desulfovibrio vulgaris) protein is Sulfite reductase, assimilatory-type.